Reading from the N-terminus, the 470-residue chain is GTPase grn1 (470 aa).

Over residues 1 to 16 (MVSLKKKSKRRTTRLR) the composition is skewed to basic residues. A disordered region spans residues 1 to 56 (MVSLKKKSKRRTTRLRSRIEKKAAESKRKQKRADKKNPQWKSRIPKDPGIPNSFPY). Residues 17 to 27 (SRIEKKAAESK) are compositionally biased toward basic and acidic residues. Residues 153–333 (DKEFKKVVEA…LVDSPGIVFP (181 aa)) form the CP-type G domain. GTP contacts are provided by residues 202 to 205 (NKID), 276 to 283 (GYPNVGKS), and 326 to 329 (DSPG). Residues 405–415 (ARKRGRLGRGG) form an RNA-binding region.

This sequence belongs to the TRAFAC class YlqF/YawG GTPase family.

It is found in the nucleus. The protein resides in the nucleolus. In terms of biological role, required for optimal growth. Required for normal processing of ribosomal pre-rRNA. Required for nuclear export of ribosomal protein rpl2501. This chain is GTPase grn1, found in Schizosaccharomyces pombe (strain 972 / ATCC 24843) (Fission yeast).